A 250-amino-acid polypeptide reads, in one-letter code: Hydroxyethylthiazole kinase (250 aa).

Substrate is bound at residue methionine 39. Arginine 114 and threonine 159 together coordinate ATP. Glycine 186 contacts substrate.

Belongs to the Thz kinase family. Mg(2+) is required as a cofactor.

The catalysed reaction is 5-(2-hydroxyethyl)-4-methylthiazole + ATP = 4-methyl-5-(2-phosphooxyethyl)-thiazole + ADP + H(+). It functions in the pathway cofactor biosynthesis; thiamine diphosphate biosynthesis; 4-methyl-5-(2-phosphoethyl)-thiazole from 5-(2-hydroxyethyl)-4-methylthiazole: step 1/1. Catalyzes the phosphorylation of the hydroxyl group of 4-methyl-5-beta-hydroxyethylthiazole (THZ). This Lactococcus lactis subsp. cremoris (strain SK11) protein is Hydroxyethylthiazole kinase.